The following is a 95-amino-acid chain: uncharacterized protein (95 aa).

A helical membrane pass occupies residues 12–32 (IASLVVSVVVLLIGLILWFFI).

The protein localises to the cell membrane. This is an uncharacterized protein from Escherichia coli O6:H1 (strain CFT073 / ATCC 700928 / UPEC).